The primary structure comprises 119 residues: Ribonuclease P protein component (119 aa).

It belongs to the RnpA family. As to quaternary structure, consists of a catalytic RNA component (M1 or rnpB) and a protein subunit.

It carries out the reaction Endonucleolytic cleavage of RNA, removing 5'-extranucleotides from tRNA precursor.. Functionally, RNaseP catalyzes the removal of the 5'-leader sequence from pre-tRNA to produce the mature 5'-terminus. It can also cleave other RNA substrates such as 4.5S RNA. The protein component plays an auxiliary but essential role in vivo by binding to the 5'-leader sequence and broadening the substrate specificity of the ribozyme. This chain is Ribonuclease P protein component, found in Haemophilus influenzae (strain 86-028NP).